The chain runs to 605 residues: Granule-bound starch synthase 1, chloroplastic/amyloplastic (605 aa).

A chloroplast-targeting transit peptide spans 1–72; it reads MAALATSQLV…GGRFPSLVVC (72 aa). Lys-91 contacts ADP-alpha-D-glucose.

It belongs to the glycosyltransferase 1 family. Bacterial/plant glycogen synthase subfamily.

Its subcellular location is the plastid. The protein resides in the chloroplast. It is found in the amyloplast. It catalyses the reaction an NDP-alpha-D-glucose + [(1-&gt;4)-alpha-D-glucosyl](n) = [(1-&gt;4)-alpha-D-glucosyl](n+1) + a ribonucleoside 5'-diphosphate + H(+). The protein operates within glycan biosynthesis; starch biosynthesis. Functionally, required for the synthesis of amylose in endosperm. The sequence is that of Granule-bound starch synthase 1, chloroplastic/amyloplastic (WAXY) from Zea mays (Maize).